We begin with the raw amino-acid sequence, 761 residues long: Translational repressor ifet-1 (761 aa).

Disordered regions lie at residues 101–274 (SPQR…SSGG), 386–446 (KGME…QHLH), 557–592 (VQRQ…AHNQ), 681–702 (QQAQ…QQHQ), and 730–761 (GSQF…AVPK). Basic and acidic residues-rich tracts occupy residues 114–128 (PTDD…ERLG), 164–189 (RGTR…EERL), and 212–222 (IELRGFDEPKK). Composition is skewed to polar residues over residues 400 to 410 (QDPSQQAQLLQ), 557 to 568 (VQRQLQKSSSNA), 576 to 592 (SQSP…AHNQ), and 690 to 702 (ERQG…QQHQ).

As to quaternary structure, interacts with cgh-1. Interacts with ife-1 and oma-1. As to expression, in the embryo, significantly enriched in the germ cell lineage.

The protein resides in the cytoplasm. In terms of biological role, involved in translational repression of multiple mRNAs in the distal gonad. Recruited to the 3' untranslated region (UTR) of zif-1 by oma-1 and is required for translational repression of zif-1. May also be involved in translational repression of mei-1 through recruitment to the mei-1 3' UTR by oma-1. Required for oogenesis but not spermatogenesis, for P granule formation and for the localization of car-1 and cgh-1 to P granules. Required for normal spindle orientation in early embryos. The polypeptide is Translational repressor ifet-1 (Caenorhabditis elegans).